Reading from the N-terminus, the 559-residue chain is MDIKRTILWVIFSMSLVLLYDNWQRANGHASMFFPSTTQQQAASAPAASGAAAQGDVPKANVQPATGTSAAPAAGAAPQAAAQPTGEKIVVTTDTVRAEIDTAGGIVSRLELLKEHEKDGKPVVLFERDNVRTYMARSGLIGGDLPNHTTVFTAAPGPRALDGAEQVQVVLTGEKNGVKLVKTYTFRKGSYVVDSKFDVTNAGTAPVSPTLYLELARDGSKVEQSQFYSTFTGPAIYTDADKYHKLSFEDIAKGKATVPAAANNGWVAMVQHYFASAWIPQTGKEHSFYVQQIDPNLYRVGIQQPLGELAPGATVSTDARLFAGPQEEHMLEKIAPGLELVKDYGWLTILAKPLFWLLEKLHGFLGNWGWSIIALTVLIKLVFFPLSAASYKSMGKMKDLQPRMTSIRERYKNDPQKMNQEMMALYRTEKVNPLGGCLPIVIQIPVFIALYWVLLSSVEMRGAPWLGWIHDLSVPDPFYILPIVMAVSMFVQTKLNPTPPDPVQAKVMMIMPLVFSVMFFFFPAGLVLYWVVNNILSIAQQWQINRMLGKGKAAVVAKS.

Residues 7–24 (ILWVIFSMSLVLLYDNWQ) traverse the membrane as a helical segment. Low complexity-rich tracts occupy residues 45 to 55 (APAASGAAAQG) and 63 to 82 (QPAT…QAAA). The segment at 45 to 82 (APAASGAAAQGDVPKANVQPATGTSAAPAAGAAPQAAA) is disordered. 5 helical membrane-spanning segments follow: residues 338 to 358 (LELV…FWLL), 364 to 384 (FLGN…LVFF), 434 to 454 (LGGC…YWVL), 472 to 492 (LSVP…MFVQ), and 507 to 527 (VMMI…AGLV).

It belongs to the OXA1/ALB3/YidC family. Type 1 subfamily. As to quaternary structure, interacts with the Sec translocase complex via SecD. Specifically interacts with transmembrane segments of nascent integral membrane proteins during membrane integration.

The protein resides in the cell inner membrane. Its function is as follows. Required for the insertion and/or proper folding and/or complex formation of integral membrane proteins into the membrane. Involved in integration of membrane proteins that insert both dependently and independently of the Sec translocase complex, as well as at least some lipoproteins. Aids folding of multispanning membrane proteins. In Cupriavidus taiwanensis (strain DSM 17343 / BCRC 17206 / CCUG 44338 / CIP 107171 / LMG 19424 / R1) (Ralstonia taiwanensis (strain LMG 19424)), this protein is Membrane protein insertase YidC.